The chain runs to 492 residues: MKKAILSVSNKTGIVEFAKALTQLNYELYSTGGTKRILDEANVPVRSVSDLTHFPEIMDGRVKTLHPAVHGGILADRNKPQHLNELSEQHIDLIDMVVVNLYPFQQTVANPDVTMDEAIENIDIGGPTMLRAAAKNYKHVTTIVHPADYQEVLTRLRNDSLDESYRQSLMIKVFEHTAEYDEAIVRFFKGDKETLRYGENPQQSAYFVRTSNAKHTIAGAKQLHGKQLSYNNIKDADATLALVKKFDTPAAVAVKHMNPCGVGIGDTIEQAFQHAYEADSQSIFGGIVALNRAVTPELAEQLHSIFLEVIIAPKFTDEALDILKQKKNVRLLEIDMTIDSNEEEFVSVSGGYLVQDKDNYVVPKEEMKVVTEVAPTDEQWEAMLLGWKVVPSVKSNAIILSNNKQTVGIGAGQMNRVGAAKIALERAIEINDHVALVSDGFFPMGDTVELAAQHGIKAIIQPGGSIKDQDSIDMANKHGIAMVVTGTRHFKH.

The 144-residue stretch at 1 to 144 (MKKAILSVSN…KNYKHVTTIV (144 aa)) folds into the MGS-like domain.

It belongs to the PurH family.

The enzyme catalyses (6R)-10-formyltetrahydrofolate + 5-amino-1-(5-phospho-beta-D-ribosyl)imidazole-4-carboxamide = 5-formamido-1-(5-phospho-D-ribosyl)imidazole-4-carboxamide + (6S)-5,6,7,8-tetrahydrofolate. The catalysed reaction is IMP + H2O = 5-formamido-1-(5-phospho-D-ribosyl)imidazole-4-carboxamide. The protein operates within purine metabolism; IMP biosynthesis via de novo pathway; 5-formamido-1-(5-phospho-D-ribosyl)imidazole-4-carboxamide from 5-amino-1-(5-phospho-D-ribosyl)imidazole-4-carboxamide (10-formyl THF route): step 1/1. It participates in purine metabolism; IMP biosynthesis via de novo pathway; IMP from 5-formamido-1-(5-phospho-D-ribosyl)imidazole-4-carboxamide: step 1/1. This Staphylococcus aureus (strain bovine RF122 / ET3-1) protein is Bifunctional purine biosynthesis protein PurH.